Consider the following 617-residue polypeptide: Secretogranin-2 (617 aa).

The first 27 residues, methionine 1–alanine 27, serve as a signal peptide directing secretion. A propeptide spanning residues alanine 28 to phenylalanine 30 is cleaved from the precursor. The segment at asparagine 123–methionine 147 is disordered. Position 151 is a sulfotyrosine (tyrosine 151). Phosphoserine is present on residues serine 174, serine 268, serine 432, serine 532, serine 555, and serine 556. The tract at residues asparagine 552–glutamine 583 is disordered.

This sequence belongs to the chromogranin/secretogranin protein family. Interacts with Secretogranin III/SCG3.

It localises to the secreted. In terms of biological role, neuroendocrine protein of the granin family that regulates the biogenesis of secretory granules. In Macaca fascicularis (Crab-eating macaque), this protein is Secretogranin-2 (SCG2).